The primary structure comprises 1004 residues: UPF0182 protein Noca_1530 (1004 aa).

The tract at residues 1–20 (MSELFDEAPRDPGPPARSGS) is disordered. 7 helical membrane passes run 26 to 46 (LIVTAVVLVIGFLGLSTFAGI), 71 to 91 (VLFFLFGAGMALVVGVNIYLA), 120 to 140 (TWLLVGVALVLGAFAGSSAIG), 183 to 203 (MAVLVVALIAAAVVHYLYGGI), 212 to 232 (LSGAAQAQISVLLGFFVLAKA), 261 to 281 (VLPAKNILLGISIICAVLFFV), and 293 to 313 (VGLALLAVSAILLGLIWPGIV). Disordered stretches follow at residues 899 to 924 (GVSTGPGTQPPDTGQPGDNENPPPAT) and 974 to 1004 (LGQKRGSAGQPSGSPSGSASSSPSESPSPSS). Composition is skewed to low complexity over residues 903–916 (GPGTQPPDTGQPGD) and 979–1004 (GSAGQPSGSPSGSASSSPSESPSPSS).

It belongs to the UPF0182 family.

The protein localises to the cell membrane. The chain is UPF0182 protein Noca_1530 from Nocardioides sp. (strain ATCC BAA-499 / JS614).